A 303-amino-acid polypeptide reads, in one-letter code: UDP-N-acetylenolpyruvoylglucosamine reductase (303 aa).

The FAD-binding PCMH-type domain occupies 32 to 212 (IGGKADLFLN…EQETKEYLAK (181 aa)). Residue Arg-176 is part of the active site. Residue Ser-226 is the Proton donor of the active site. Glu-296 is a catalytic residue.

This sequence belongs to the MurB family. Requires FAD as cofactor.

It is found in the cytoplasm. The enzyme catalyses UDP-N-acetyl-alpha-D-muramate + NADP(+) = UDP-N-acetyl-3-O-(1-carboxyvinyl)-alpha-D-glucosamine + NADPH + H(+). The protein operates within cell wall biogenesis; peptidoglycan biosynthesis. Functionally, cell wall formation. This is UDP-N-acetylenolpyruvoylglucosamine reductase from Desulforamulus reducens (strain ATCC BAA-1160 / DSM 100696 / MI-1) (Desulfotomaculum reducens).